The chain runs to 946 residues: DNA primase (946 aa).

The interval 596-626 (RDTEEDEDGKENKNNVPDNGVFQKTTSSVDT) is disordered. Residues 617–626 (FQKTTSSVDT) show a composition bias toward polar residues. The segment at 881–920 (CLNYTHRNPQETVQVFIDLRTEHSYALWASLWSRCFTKKC) adopts a CHC2-type zinc-finger fold.

This sequence belongs to the herpesviridae DNA primase family. Associates with the helicase and the primase-associated factor to form the helicase-primase factor. Interacts with host SNAPIN.

The protein localises to the host nucleus. Its function is as follows. Essential component of the helicase/primase complex. Unwinds the DNA at the replication forks and generates single-stranded DNA for both leading and lagging strand synthesis. The primase initiates primer synthesis and thereby produces large amount of short RNA primers on the lagging strand that the polymerase elongates using dNTPs. The protein is DNA primase (UL70) of Homo sapiens (Human).